The sequence spans 264 residues: 3-methyl-2-oxobutanoate hydroxymethyltransferase (264 aa).

Residues Asp44 and Asp83 each coordinate Mg(2+). 3-methyl-2-oxobutanoate-binding positions include 44–45 (DS), Asp83, and Lys112. Glu114 contributes to the Mg(2+) binding site. The Proton acceptor role is filled by Glu181.

This sequence belongs to the PanB family. In terms of assembly, homodecamer; pentamer of dimers. Requires Mg(2+) as cofactor.

Its subcellular location is the cytoplasm. The enzyme catalyses 3-methyl-2-oxobutanoate + (6R)-5,10-methylene-5,6,7,8-tetrahydrofolate + H2O = 2-dehydropantoate + (6S)-5,6,7,8-tetrahydrofolate. Its pathway is cofactor biosynthesis; coenzyme A biosynthesis. Catalyzes the reversible reaction in which hydroxymethyl group from 5,10-methylenetetrahydrofolate is transferred onto alpha-ketoisovalerate to form ketopantoate. The polypeptide is 3-methyl-2-oxobutanoate hydroxymethyltransferase (Pyrobaculum arsenaticum (strain DSM 13514 / JCM 11321 / PZ6)).